The sequence spans 348 residues: Rhodopsin (348 aa).

The residue at position 1 (Met1) is an N-acetylmethionine. Residues 1-36 are Extracellular-facing; the sequence is MNGTEGPNFYVPYSNKSGVVRSPYEEPQYYLAEPWM. N-linked (GlcNAc...) asparagine glycosylation is found at Asn2 and Asn15. Residues 37–61 traverse the membrane as a helical segment; sequence FSCLAAYMFMLIVLGFPINFLTLYV. Residues 62–73 lie on the Cytoplasmic side of the membrane; sequence TIQHKKLRTPLN. The helical transmembrane segment at 74-96 threads the bilayer; sequence YILLNLAVADLFMVICGFTTTLV. At 97–110 the chain is on the extracellular side; the sequence is TSLNGYFVFGTTGC. Cys110 and Cys187 are oxidised to a cystine. Residues 111-133 traverse the membrane as a helical segment; sequence LVEGFFATTGGEVALWALVVLAI. Positions 134-136 match the 'Ionic lock' involved in activated form stabilization motif; it reads ERY. Over 134–152 the chain is Cytoplasmic; that stretch reads ERYIVVCKPMSNFRFGENH. The chain crosses the membrane as a helical span at residues 153 to 173; that stretch reads AIMGVAFTWIMALACSVPPIF. Residues 174–202 are Extracellular-facing; sequence GWSRYIPEGMQCSCGIDYYTLNPEFNNES. Residue Glu201 participates in Zn(2+) binding. A helical membrane pass occupies residues 203–224; sequence FVIYMFVVHFIIPLTVIFFCYG. Topologically, residues 225 to 252 are cytoplasmic; it reads QLVFTVKEAAAQQQESATTQKAEKEVTR. Residues 253-274 form a helical membrane-spanning segment; the sequence is MVIIMVIAFLICWVPYASVAFY. The Extracellular segment spans residues 275 to 286; sequence IFTHQGSDFGPI. Gln279 is a Zn(2+) binding site. A helical membrane pass occupies residues 287–308; sequence FMTLPAFFAKSSSIYNPVIYIM. The residue at position 296 (Lys296) is an N6-(retinylidene)lysine. Residues 309 to 348 lie on the Cytoplasmic side of the membrane; that stretch reads MNKQFRNCMITTLCCGKNPLGDDEASTTASKTETSQVAPA. 2 S-palmitoyl cysteine lipidation sites follow: Cys322 and Cys323. An interaction with SAG region spans residues 330–348; that stretch reads DDEASTTASKTETSQVAPA. At Ser334 the chain carries Phosphoserine. Phosphothreonine is present on residues Thr335 and Thr336. Phosphoserine is present on Ser338. Residues Thr340 and Thr342 each carry the phosphothreonine modification. At Ser343 the chain carries Phosphoserine.

This sequence belongs to the G-protein coupled receptor 1 family. Opsin subfamily. In terms of assembly, homodimer. May form a complex composed of RHO, GRK1 and RCVRN in a Ca(2+)-dependent manner; RCVRN prevents the interaction between GRK1 and RHO. Interacts with GRK1. Interacts (phosphorylated form) with SAG. Interacts with GNAT1. Interacts with GNAT3. SAG and G-proteins compete for a common binding site. Interacts with PRCD; the interaction promotes PRCD stability. Forms a complex with ASAP1 and ARF4. Forms a complex with ASAP1, RAB11A, Rabin8/RAB3IP, ARF4 and RAB11FIP3; the complex regulates Golgi-to-cilia rhodopsin/RHO transport in photoreceptors. Phosphorylated on some or all of the serine and threonine residues present in the C-terminal region. In terms of processing, contains one covalently linked retinal chromophore. Upon light absorption, the covalently bound 11-cis-retinal is converted to all-trans-retinal. After hydrolysis of the Schiff base and release of the covalently bound all-trans-retinal, active rhodopsin is regenerated by binding of a fresh molecule of 11-cis-retinal.

The protein resides in the membrane. The protein localises to the cell projection. It localises to the cilium. Its subcellular location is the photoreceptor outer segment. Its function is as follows. Photoreceptor required for image-forming vision at low light intensity. Required for photoreceptor cell viability after birth. Light-induced isomerization of 11-cis to all-trans retinal triggers a conformational change that activates signaling via G-proteins. Subsequent receptor phosphorylation mediates displacement of the bound G-protein alpha subunit by the arrestin SAG and terminates signaling. The protein is Rhodopsin (RHO) of Sminthopsis crassicaudata (Fat-tailed dunnart).